Here is a 35-residue protein sequence, read N- to C-terminus: Leukocyte cysteine proteinase inhibitor 2 (35 aa).

A disordered region spans residues 1 to 35; sequence LAGGLTEPRPADTEIQEIANKVKPQLEEKTNKKYD. Over residues 24–35 the composition is skewed to basic and acidic residues; sequence PQLEEKTNKKYD.

This sequence belongs to the cystatin family.

The protein resides in the cytoplasm. In terms of biological role, potent inhibitor of cathepsins L and S, and papain. The polypeptide is Leukocyte cysteine proteinase inhibitor 2 (Sus scrofa (Pig)).